We begin with the raw amino-acid sequence, 272 residues long: uncharacterized protein (272 aa).

It is found in the periplasm. In terms of biological role, may be involved in ulvan degradation. Ulvan is the main polysaccharide component of the Ulvales (green seaweed) cell wall. It is composed of disaccharide building blocks comprising 3-sulfated rhamnose (Rha3S) linked to D-glucuronic acid (GlcA), L-iduronic acid (IduA), or D-xylose (Xyl). This is an uncharacterized protein from Formosa agariphila (strain DSM 15362 / KCTC 12365 / LMG 23005 / KMM 3901 / M-2Alg 35-1).